Here is an 86-residue protein sequence, read N- to C-terminus: Putative regulatory protein Desal_2819 (86 aa).

Belongs to the RemA family.

This is Putative regulatory protein Desal_2819 from Maridesulfovibrio salexigens (strain ATCC 14822 / DSM 2638 / NCIMB 8403 / VKM B-1763) (Desulfovibrio salexigens).